Reading from the N-terminus, the 98-residue chain is Lactococcin-A immunity protein (98 aa).

Functionally, imparts immunity to lactococcin-A to naturally sensitive host strains. The sequence is that of Lactococcin-A immunity protein (lciA) from Lactococcus lactis subsp. cremoris (Streptococcus cremoris).